The following is a 1254-amino-acid chain: DNA-directed RNA polymerase subunit beta (1254 aa).

The protein belongs to the RNA polymerase beta chain family. As to quaternary structure, the RNAP catalytic core consists of 2 alpha, 1 beta, 1 beta' and 1 omega subunit. When a sigma factor is associated with the core the holoenzyme is formed, which can initiate transcription.

It catalyses the reaction RNA(n) + a ribonucleoside 5'-triphosphate = RNA(n+1) + diphosphate. DNA-dependent RNA polymerase catalyzes the transcription of DNA into RNA using the four ribonucleoside triphosphates as substrates. This is DNA-directed RNA polymerase subunit beta from Protochlamydia amoebophila (strain UWE25).